We begin with the raw amino-acid sequence, 1479 residues long: Chromosome partition protein MukB (1479 aa).

34–41 (GGNGAGKS) contacts ATP. Coiled coils occupy residues 337–418 (LNLV…QYQQ), 511–604 (QAER…APVW), 780–810 (RAAR…DVQK), 847–1116 (ELDR…AKAG), and 1206–1265 (DDPV…LQAV). Residues 666 to 783 (PGGSEDPRLN…EVPLFGRAAR (118 aa)) are flexible hinge.

This sequence belongs to the SMC family. MukB subfamily. Homodimerization via its hinge domain. Binds to DNA via its C-terminal region. Interacts, and probably forms a ternary complex, with MukE and MukF via its C-terminal region. The complex formation is stimulated by calcium or magnesium. Interacts with tubulin-related protein FtsZ.

It localises to the cytoplasm. Its subcellular location is the nucleoid. Its function is as follows. Plays a central role in chromosome condensation, segregation and cell cycle progression. Functions as a homodimer, which is essential for chromosome partition. Involved in negative DNA supercoiling in vivo, and by this means organize and compact chromosomes. May achieve or facilitate chromosome segregation by condensation DNA from both sides of a centrally located replisome during cell division. This Pectobacterium atrosepticum (strain SCRI 1043 / ATCC BAA-672) (Erwinia carotovora subsp. atroseptica) protein is Chromosome partition protein MukB.